A 514-amino-acid polypeptide reads, in one-letter code: Alstonine synthase (514 aa).

A helical membrane pass occupies residues 4-24 (PQFSCLLPAFFLLVVFLFLLI). A glycan (N-linked (GlcNAc...) asparagine) is linked at asparagine 428. Residue cysteine 450 coordinates heme.

This sequence belongs to the cytochrome P450 family. It depends on heme as a cofactor.

The protein localises to the membrane. It carries out the reaction tetrahydroalstonine + A + reduced [NADPH--hemoprotein reductase] + O2 = alstonine + AH2 + oxidized [NADPH--hemoprotein reductase] + 2 H2O + H(+). It participates in alkaloid biosynthesis. Functionally, a cytochrome P450 monooxygenase involved in the biosynthesis of pentacyclic alkaloids natural products such as alstonine, putative antipsychotic compounds. Catalyzes the conversion of tetrahydroalstonine to alstonine. No oxidative activity towards ajmalicine. The polypeptide is Alstonine synthase (Alstonia scholaris (Dogbane)).